The sequence spans 459 residues: Serine--tRNA ligase (459 aa).

L-serine is bound at residue 254–256 (TAE). Residues 285–287 (RKE) and V301 contribute to the ATP site. E308 lines the L-serine pocket. 372 to 375 (EMVS) contributes to the ATP binding site. Residue T408 participates in L-serine binding.

It belongs to the class-II aminoacyl-tRNA synthetase family. Type-1 seryl-tRNA synthetase subfamily. As to quaternary structure, homodimer. The tRNA molecule binds across the dimer.

The protein resides in the cytoplasm. It carries out the reaction tRNA(Ser) + L-serine + ATP = L-seryl-tRNA(Ser) + AMP + diphosphate + H(+). The enzyme catalyses tRNA(Sec) + L-serine + ATP = L-seryl-tRNA(Sec) + AMP + diphosphate + H(+). Its pathway is aminoacyl-tRNA biosynthesis; selenocysteinyl-tRNA(Sec) biosynthesis; L-seryl-tRNA(Sec) from L-serine and tRNA(Sec): step 1/1. Catalyzes the attachment of serine to tRNA(Ser). Is also able to aminoacylate tRNA(Sec) with serine, to form the misacylated tRNA L-seryl-tRNA(Sec), which will be further converted into selenocysteinyl-tRNA(Sec). In Staphylothermus marinus (strain ATCC 43588 / DSM 3639 / JCM 9404 / F1), this protein is Serine--tRNA ligase.